Consider the following 514-residue polypeptide: MAGPEPPMPLSRGGPGSASLSPPRGDRTLLVRHLPAELTAEEKEDLLKYFGAQSVRVLSDKGRLKHTAFATFPNEKAAIKALTRLHQLKLLGHTLVVEFAKEQDRVHSPCSTSNTEKKKRLDDTVENDKEKKEPDILTVENGIAPNHGLTFPLNSCLKYMYPPPSSTILANIVNALASVPKFYVQVLHLMNKMNLPTPFGPITARPPMYEDYMPLHAPLPPTSPQPPEEPPLPDEDEDLSSKESEYESSDEEDRQRMNRLMELANLQPKRPKTEKPRHVRKKRKIKDMLNIPSSASHSLHPVLLPSDVFDQPQSVGNKKIEFNISTNMPAAFNKDLETQPNNEEENSDSPDTGLDSNTGFGKIFPKPNLNITEEITEDSDEIPSQFISRKELEKGRISREEMETLSVFRSYEPGEPNCRIYVKNLARHVQEKDLKFIFGRYVDFSSETQRIMFDIRLMKEGRMKGQAFVGLPNEKAAAKALKEANGYVLFGKPMVVQFARSARPKQDSKEGKRK.

The segment at 1 to 26 is disordered; sequence MAGPEPPMPLSRGGPGSASLSPPRGD. At S21 the chain carries Phosphoserine. Positions 27–102 constitute an RRM 1 domain; sequence RTLLVRHLPA…HTLVVEFAKE (76 aa). Disordered regions lie at residues 106-133, 213-282, and 337-363; these read VHSPCSTSNTEKKKRLDDTVENDKEKKE, MPLH…VRKK, and ETQPNNEEENSDSPDTGLDSNTGFGKI. S108 bears the Phosphoserine mark. The segment covering 115–133 has biased composition (basic and acidic residues); sequence TEKKKRLDDTVENDKEKKE. Positions 217–230 are enriched in pro residues; sequence APLPPTSPQPPEEP. At S349 the chain carries Phosphoserine. The region spanning 418 to 501 is the RRM 2 domain; the sequence is CRIYVKNLAR…KPMVVQFARS (84 aa).

As to quaternary structure, component of the U11/U12 snRNPs that are part of the U12-type spliceosome. Found in a complex with m(7)G-capped U12 snRNA. Interacts with PDCD7.

The protein resides in the nucleus. Functionally, participates in pre-mRNA U12-dependent splicing, performed by the minor spliceosome which removes U12-type introns. U12-type introns comprises less than 1% of all non-coding sequences. Binds to the 3'-stem-loop of m(7)G-capped U12 snRNA. In Mus musculus (Mouse), this protein is RNA-binding region-containing protein 3 (Rnpc3).